Reading from the N-terminus, the 322-residue chain is Beta-ketoacyl-[acyl-carrier-protein] synthase III (322 aa).

Active-site residues include Cys113 and His249. Residues 250-254 (QANVR) are ACP-binding. The active site involves Asn279.

Belongs to the thiolase-like superfamily. FabH family. As to quaternary structure, homodimer.

Its subcellular location is the cytoplasm. The enzyme catalyses malonyl-[ACP] + acetyl-CoA + H(+) = 3-oxobutanoyl-[ACP] + CO2 + CoA. It functions in the pathway lipid metabolism; fatty acid biosynthesis. Catalyzes the condensation reaction of fatty acid synthesis by the addition to an acyl acceptor of two carbons from malonyl-ACP. Catalyzes the first condensation reaction which initiates fatty acid synthesis and may therefore play a role in governing the total rate of fatty acid production. Possesses both acetoacetyl-ACP synthase and acetyl transacylase activities. Its substrate specificity determines the biosynthesis of branched-chain and/or straight-chain of fatty acids. The protein is Beta-ketoacyl-[acyl-carrier-protein] synthase III of Anaplasma marginale (strain St. Maries).